Here is an 898-residue protein sequence, read N- to C-terminus: MFSQQQQQQLQQQQQQLQQLQQQQLQQQQLQQQQLLQLQQLLQQSPPQAPLPMAVSRGLPPQQPQQPLLNLQGTNSASLLNGSMLQRALLLQQLQGLDQFAMPPATYDTAGLTMPTATLGNLRGYGMASPGLAAPSLTPPQLATPNLQQFFPQATRQSLLGPPPVGVPMNPSQFNLSGRNPQKQARTSSSTTPNRKDSSSQTMPVEDKSDPPEGSEEAAEPRMDTPEDQDLPPCPEDIAKEKRTPAPEPEPCEASELPAKRLRSSEEPTEKEPPGQLQVKAQPQARMTVPKQTQTPDLLPEALEAQVLPRFQPRVLQVQAQVQSQTQPRIPSTDTQVQPKLQKQAQTQTSPEHLVLQQKQVQPQLQQEAEPQKQVQPQVQPQAHSQGPRQVQLQQEAEPLKQVQPQVQPQAHSQPPRQVQLQLQKQVQTQTYPQVHTQAQPSVQPQEHPPAQVSVQPPEQTHEQPHTQPQVSLLAPEQTPVVVHVCGLEMPPDAVEAGGGMEKTLPEPVGTQVSMEEIQNESACGLDVGECENRAREMPGVWGAGGSLKVTILQSSDSRAFSTVPLTPVPRPSDSVSSTPAATSTPSKQALQFFCYICKASCSSQQEFQDHMSEPQHQQRLGEIQHMSQACLLSLLPVPRDVLETEDEEPPPRRWCNTCQLYYMGDLIQHRRTQDHKIAKQSLRPFCTVCNRYFKTPRKFVEHVKSQGHKDKAKELKSLEKEIAGQDEDHFITVDAVGCFEGDEEEEEDDEDEEEIEVEEELCKQVRSRDISREEWKGSETYSPNTAYGVDFLVPVMGYICRICHKFYHSNSGAQLSHCKSLGHFENLQKYKAAKNPSPTTRPVSRRCAINARNALTALFTSSGRPPSQPNTQDKTPSKVTARPSQPPLPRRSTRLKT.

Disordered regions lie at residues Q48–L69, Q157–A305, and V318–V471. Residues N170–M203 are compositionally biased toward polar residues. S209 is subject to Phosphoserine. T244 bears the Phosphothreonine mark. Residues R263 to P273 show a composition bias toward basic and acidic residues. K280 participates in a covalent cross-link: Glycyl lysine isopeptide (Lys-Gly) (interchain with G-Cter in SUMO2). The segment covering V318–Q327 has biased composition (low complexity). Positions P328–P351 are enriched in polar residues. K340 is covalently cross-linked (Glycyl lysine isopeptide (Lys-Gly) (interchain with G-Cter in SUMO2)). Position 350 is a phosphoserine (S350). Residues V355 to A383 show a composition bias toward low complexity. Residues H384–Q395 show a composition bias toward polar residues. K401 participates in a covalent cross-link: Glycyl lysine isopeptide (Lys-Gly) (interchain with G-Cter in SUMO2). The span at Q402–V435 shows a compositional bias: low complexity. Residues H436–P445 are compositionally biased toward polar residues. Residue S547 is modified to Phosphoserine. K549 is covalently cross-linked (Glycyl lysine isopeptide (Lys-Gly) (interchain with G-Cter in SUMO2)). The disordered stretch occupies residues S562–S584. T567 carries the phosphothreonine modification. Over residues P572–S584 the composition is skewed to low complexity. Residues K588, K680, and K705 each participate in a glycyl lysine isopeptide (Lys-Gly) (interchain with G-Cter in SUMO2) cross-link. The segment at Y799–K830 adopts a Matrin-type zinc-finger fold. At S821 the chain carries Phosphoserine. K830 is covalently cross-linked (Glycyl lysine isopeptide (Lys-Gly) (interchain with G-Cter in SUMO2)). A Phosphoserine modification is found at S838. The span at L859 to K879 shows a compositional bias: polar residues. The tract at residues L859 to T898 is disordered. K879 participates in a covalent cross-link: Glycyl lysine isopeptide (Lys-Gly) (interchain with G-Cter in SUMO2).

Interacts with CIP/WAF1.

It is found in the nucleus. Its function is as follows. May regulate the subcellular localization of CIP/WAF1. This is Cip1-interacting zinc finger protein (CIZ1) from Homo sapiens (Human).